A 469-amino-acid chain; its full sequence is MSEEVPQQFPSSKRQLHPSLSSMKPPLVAPGEYHRFDAAETRGGGAVADQVVSDAIVIKSTLKRKTDLVNQIVEVNELNTGVLQTPVSGKGGKAKKTSRSAKSNKSGTLASGSNAGSPGNNFAQAGTCRYDSSLGLLTKKFINLIKQAEDGILDLNKAADTLEVQKRRIYDITNVLEGIGLIEKTLKNRIQWKGLDVSKPGETIESIANLQDEVQNLAAEEARLDDQIRESQERLTSLSEDENNKRLLFVTENDIKNLPCFQNKTLIAVKAPHGTTLEVPDPDEAGGYQRRYRIILRSTMGPIDVYLVSQFEESFEDIPQADEPSNVPDEPSNVPDVPSNLPSTSGLPENHDVSMPMKEESTERNMETQEVDDTQRVYSDIESHDFVDGIMKIVPPDLDMGVDYWFRSEVGEVSITDMWPDESGPDWNQMITFDQDHAGPSDNKILEQPQTPSSPTPEESTATRSPTGS.

2 disordered regions span residues 1–28 (MSEEVPQQFPSSKRQLHPSLSSMKPPLV) and 84–118 (QTPVSGKGGKAKKTSRSAKSNKSGTLASGSNAGSP). Composition is skewed to polar residues over residues 8–22 (QFPSSKRQLHPSLSS) and 100–118 (SAKSNKSGTLASGSNAGSP). The DNA-binding element occupies 129–194 (RYDSSLGLLT…TLKNRIQWKG (66 aa)). A coiled-coil region spans residues 202–246 (ETIESIANLQDEVQNLAAEEARLDDQIRESQERLTSLSEDENNKR). Residues 210 to 238 (LQDEVQNLAAEEARLDDQIRESQERLTSL) are leucine-zipper. The segment at 319–374 (PQADEPSNVPDEPSNVPDVPSNLPSTSGLPENHDVSMPMKEESTERNMETQEVDDT) is disordered. A compositionally biased stretch (basic and acidic residues) spans 349 to 374 (ENHDVSMPMKEESTERNMETQEVDDT). A retinoblastoma protein binding region spans residues 403–419 (DYWFRSEVGEVSITDMW). Residues 426 to 469 (DWNQMITFDQDHAGPSDNKILEQPQTPSSPTPEESTATRSPTGS) are disordered. The span at 447-469 (EQPQTPSSPTPEESTATRSPTGS) shows a compositional bias: low complexity.

It belongs to the E2F/DP family. As to quaternary structure, heterodimer with DP proteins. Interacts (via dimerization domain) preferentially with DPA, but also with DPB. Interacts with PURA1 and retinoblastoma-related protein RBR1. Component of a DREAM-like complex which modulates a variety of developmentally regulated genes and of the mitotic genes in proliferating and differentiated cells. Interacts with MYB3R4 only at early stages of leaves development. Phosphorylated. As to expression, expressed in proliferating cells and several differentiated tissues. Detected in inflorescence and shoot apical meristems, cotyledonary vascular tissues, leaf primordia, young leaves, base of trichomes, central cylinder and elongation zone of roots, lateral root primordia, flowers, pistils of immature flowers and pollen grains.

It localises to the cytoplasm. The protein resides in the nucleus. Transcription activator that binds DNA cooperatively with DP proteins through the E2 recognition site, 5'-TTTC[CG]CGC-3' found in the promoter region of a number of genes whose products are involved in cell cycle regulation or in DNA replication. The binding of retinoblastoma-related proteins represses transactivation. Involved in the control of cell-cycle progression from G1 to S phase and from G2 to M phase. Stimulates cell proliferation and delays differentiation. Represses cell enlargement and endoreduplication in auxin-free conditions. This chain is Transcription factor E2FB (E2FB), found in Arabidopsis thaliana (Mouse-ear cress).